The chain runs to 495 residues: Cytochrome P450 monooxygenase aneF (495 aa).

A helical membrane pass occupies residues methionine 1–histidine 21. An N-linked (GlcNAc...) asparagine glycan is attached at asparagine 47. Cysteine 437 lines the heme pocket.

This sequence belongs to the cytochrome P450 family. The cofactor is heme.

It localises to the membrane. The catalysed reaction is dauca-4,7-diene + 3 reduced [NADPH--hemoprotein reductase] + 3 O2 = asperaculane D + 3 oxidized [NADPH--hemoprotein reductase] + 4 H2O + 4 H(+). It participates in secondary metabolite biosynthesis. In terms of biological role, cytochrome P450 monooxygenase; part of the gene cluster that mediates the biosynthesis of aculenes, a unique type of norsesquiterpenes that contain a nordaucane skeleton linked to an L-proline moiety and are of mixed biosynthetic origin. The pathway begins with the synthesis of dauca-4,7-diene by the terpene cyclase aneC using farnesyl pyrophosphate (FPP) as substrate. The cytochrome P450 monooxygenase aneF then performs the initial oxidation at C-12 of dauca-4,7-diene to yield asperaculane D. Asperaculane D is substrate of the cytochrome P450 monooxygenase aneD for C-10 hydroxylation to yield asperaculane E. The cytochrome P450 monooxygenase aneG then converts asperaculane E into aculene D via C-2 oxidation. The monomodular nonribosomal peptide synthtase aneB adenylates L-proline and the thiohydrolase aneE transfers this activated L-proline derivative to aculenes D and C to produce respectively aculenes B and A. The dioxygenase aneA converts aculene D into aculene C, and aculene B into aculene A by introducing the 5,6-alkene moiety. Asperculanes A, B, C and F, as well as 14-prolyl asperculane C, might be shunt products of the pathway. The polypeptide is Cytochrome P450 monooxygenase aneF (Aspergillus aculeatus (strain ATCC 16872 / CBS 172.66 / WB 5094)).